A 476-amino-acid polypeptide reads, in one-letter code: Serine/threonine-protein kinase PBL36 (476 aa).

The Protein kinase domain maps to 126–412 (FRPESLLGEG…VEALKPLPNL (287 aa)). Residues 132–140 (LGEGGFGCV) and Lys164 each bind ATP. Position 209 is a phosphotyrosine (Tyr209). The active-site Proton acceptor is the Asp259. A phosphoserine mark is found at Ser263 and Ser293. Residues Thr294 and Thr299 each carry the phosphothreonine modification. Phosphotyrosine is present on Tyr307. Residues 431 to 476 (NGVRTQGGGFVSRNGPPMRSLSSLNLPQASPYRYARQSPKPKGKEP) are disordered.

It belongs to the protein kinase superfamily. Ser/Thr protein kinase family. In terms of assembly, interacts with SD129. Phosphorylated by SD129 in response to the pathogen-associated molecular pattern (PAMP) 3-OH-C10:0, a medium-chain 3-hydroxy fatty acid.

It is found in the cell membrane. The enzyme catalyses L-seryl-[protein] + ATP = O-phospho-L-seryl-[protein] + ADP + H(+). It catalyses the reaction L-threonyl-[protein] + ATP = O-phospho-L-threonyl-[protein] + ADP + H(+). Involved in chitin-triggered immune signaling and is required for reactive oxygen species (ROS) production. Acts downstream of SD129 in defense signaling triggered by the pathogen-associated molecular pattern (PAMP) 3-OH-C10:0, a medium-chain 3-hydroxy fatty acid. This chain is Serine/threonine-protein kinase PBL36, found in Arabidopsis thaliana (Mouse-ear cress).